Here is an 815-residue protein sequence, read N- to C-terminus: Sodium/hydrogen exchanger 1 (815 aa).

Over 1–98 (MVLRSGICGL…FPVLGIDYTH (98 aa)) the chain is Extracellular. A glycan (O-linked (GalNAc...) threonine) is linked at T42. Residues 42–79 (TASTIRSSEPPRERSIGDVTTAPPEVTPESRPVNHSVT) are disordered. Residue S56 is glycosylated (O-linked (GalNAc...) serine). O-linked (GalNAc...) threonine glycosylation is found at T61, T62, and T68. N75 is a glycosylation site (N-linked (GlcNAc...) asparagine). The chain crosses the membrane as a helical span at residues 99–121 (VRTPFEISLWILLACLMKIGFHV). Topologically, residues 122 to 130 (IPTISSIVP) are cytoplasmic. A helical transmembrane segment spans residues 131–148 (ESCLLIVVGLLVGGLIKG). Over 149-158 (VGETPPFLQS) the chain is Extracellular. The helical transmembrane segment at 159–176 (DVFFLFLLPPIILDAGYF) threads the bilayer. The Cytoplasmic portion of the chain corresponds to 177–186 (LPLRQFTENL). Residues 187-215 (GTILIFAVVGTLWNAFFLGGLMYAVCLVG) form a helical membrane-spanning segment. Residues 216 to 222 (GEQINNI) lie on the Extracellular side of the membrane. Residues 223 to 249 (GLLDNLLFGSIISAVDPVAVLAVFEEI) form a helical membrane-spanning segment. At 250-252 (HIN) the chain is on the cytoplasmic side. Residues 253–283 (ELLHILVFGESLLNDAVTVVLYHLFEEFANY) form a helical membrane-spanning segment. Residues 284–287 (EHVG) are Extracellular-facing. The chain crosses the membrane as a helical span at residues 288 to 322 (IVDIFLGFLSFFVVALGGVLVGVVYGVIAAFTSRF). Residues 323-328 (TSHIRV) are Cytoplasmic-facing. A helical membrane pass occupies residues 329–341 (IEPLFVFLYSYMA). Topologically, residues 342-350 (YLSAELFHL) are extracellular. A helical transmembrane segment spans residues 351–371 (SGIMALIASGVVMRPYVEANI). The Cytoplasmic portion of the chain corresponds to 372-373 (SH). Residues 374-404 (KSHTTIKYFLKMWSSVSETLIFIFLGVSTVA) traverse the membrane as a helical segment. Over 405-410 (GSHHWN) the chain is Extracellular. A helical transmembrane segment spans residues 411 to 438 (WTFVISTLLFCLIARVLGVLGLTWFINK). Topologically, residues 439–444 (FRIVKL) are cytoplasmic. A helical membrane pass occupies residues 445 to 469 (TPKDQFIIAYGGLRGAIAFSLGYLL). The Extracellular segment spans residues 470-475 (DKKHFP). The helical transmembrane segment at 476 to 505 (MCDLFLTAIITVIFFTVFVQGMTIRPLVDL) threads the bilayer. Residues 503 to 545 (VDLLAVKKKQETKRSINEEIHTQFLDHLLTGIEDICGHYGHHH) form an interaction with TESC region. Residues 506-815 (LAVKKKQETK…EGEPFFPKGQ (310 aa)) lie on the Cytoplasmic side of the membrane. A PI(4,5)P2-binding region region spans residues 509–516 (KKKQETKR). An interaction with CHP2 region spans residues 515–545 (KRSINEEIHTQFLDHLLTGIEDICGHYGHHH). The tract at residues 540 to 545 (HYGHHH) is confers pH-dependent PI(4,5)P2 binding. Residues 552–560 (RFNKKYVKK) are PI(4,5)P2-binding region. S599 and S602 each carry phosphoserine. Position 603 is a phosphothreonine (T603). Residues S605 and S648 each carry the phosphoserine modification. An interaction with TESC region spans residues 633–815 (KILRNNLQKT…EGEPFFPKGQ (183 aa)). Residues 633–815 (KILRNNLQKT…EGEPFFPKGQ (183 aa)) form an interaction with CALM1 region. Positions 684–687 (LTVP) are interaction with PPP3CA. S693, S697, and S703 each carry phosphoserine. Residues 715–720 (PVITID) form an interaction with PPP3CA region. 3 positions are modified to phosphoserine: S723, S726, and S729. The tract at residues 744 to 815 (LSRDPAKVAE…EGEPFFPKGQ (72 aa)) is disordered. T779 is modified (phosphothreonine). Residues 782 to 791 (PSDSPSSQRI) are compositionally biased toward polar residues. Phosphoserine occurs at positions 785, 787, and 796.

The protein belongs to the monovalent cation:proton antiporter 1 (CPA1) transporter (TC 2.A.36) family. Homodimer; dimerization is crucial for its function. Oligomer. Interacts with CALM1 in a calcium-dependent manner. Interacts with TESC. Interacts (via the C-terminal domain) with CHP1; the interaction occurs at the plasma membrane in a calcium-dependent manner and facilitates the maturation, cell surface expression, and function of SLC9A3. Interacts with CHP2; the interaction occurs in a calcium-dependent manner. Interacts with EZR; regulates the cytoskeletal interactions of SLC9A1 and promotes stress fiber formation. O-glycosylated. Post-translationally, ubiquitinated, leading to its degradation by the proteasome. Ubiquitination is reduced by CHP1. In terms of processing, phosphorylation at Thr-779 increases SLC9A1 activity. Specifically dephosphorylated at Thr-779 by PPP3CA that negatively regulates SLC9A1 activity. Phosphorylation at Ser-648 by AKT1 reduces SLC9A1 binding to CALM1. Palmitoylated; may play a major role in SLC9A1 regulation. In terms of tissue distribution, kidney and intestine.

It is found in the cell membrane. The protein resides in the basolateral cell membrane. It catalyses the reaction Na(+)(in) + H(+)(out) = Na(+)(out) + H(+)(in). The enzyme catalyses Li(+)(out) + H(+)(in) = Li(+)(in) + H(+)(out). The catalysed reaction is Li(+)(in) + Na(+)(out) = Li(+)(out) + Na(+)(in). Activated at acidic pHs. Inhibited by amiloride and 5-amino-substituted derivatives. Inhibited by cariporide and eniporide. Phosphatidylinositol 4,5-bisphosphate (PI(4,5)P2) and phosphatidylinositol 3,4,5-trisphosphate (PI(3,4,5)P3) bind and differentially regulate SLC9A1 activity. Its function is as follows. Electroneutral Na(+) /H(+) antiporter that extrudes Na(+) in exchange for external protons driven by the inward sodium ion chemical gradient, protecting cells from acidification that occurs from metabolism. Exchanges intracellular H(+) ions for extracellular Na(+) in 1:1 stoichiometry. Plays a key role in maintening intracellular pH neutral and cell volume, and thus is important for cell growth, proliferation, migration and survival. In addition, can transport lithium Li(+) and also functions as a Na(+)/Li(+) antiporter. SLC9A1 also functions in membrane anchoring and organization of scaffolding complexes that coordinate signaling inputs. In Homo sapiens (Human), this protein is Sodium/hydrogen exchanger 1.